The primary structure comprises 95 residues: Small ubiquitin-related modifier 2-A (95 aa).

K11 is covalently cross-linked (Glycyl lysine isopeptide (Lys-Gly) (interchain with G-Cter in SUMO)). Residues 16–95 (DHINLKVAGQ…VFQQQTGGSF (80 aa)) enclose the Ubiquitin-like domain. G93 is covalently cross-linked (Glycyl lysine isopeptide (Gly-Lys) (interchain with K-? in acceptor proteins)). The propeptide occupies 94–95 (SF).

The protein belongs to the ubiquitin family. SUMO subfamily. Interacts with sae2 and ube2i. Covalently attached to a number of proteins, including top2. Post-translationally, polymeric chains can be formed through Lys-11 cross-linking. In terms of processing, cleavage of precursor form by a sentrin-specific protease is necessary for function.

It is found in the nucleus. Its function is as follows. Ubiquitin-like protein that can be covalently attached to proteins as a monomer or as a lysine-linked polymer. Covalent attachment via an isopeptide bond to its substrates requires prior activation by the E1 complex sae1-sae2 and linkage to the E2 enzyme ube2i, and can be promoted by an E3 ligase such as pias1-4. This post-translational modification on lysine residues of proteins plays a crucial role in a number of cellular processes such as nuclear transport, DNA replication and repair, mitosis and signal transduction. Polymeric sumo2 chains are also susceptible to polyubiquitination which functions as a signal for proteasomal degradation of modified proteins. This is Small ubiquitin-related modifier 2-A (sumo2-a) from Xenopus laevis (African clawed frog).